A 145-amino-acid chain; its full sequence is uncharacterized protein (145 aa).

Serine 67 bears the Phosphoserine mark.

As to expression, expressed in retina and retinoblastoma.

This is an uncharacterized protein from Homo sapiens (Human).